Consider the following 134-residue polypeptide: Retinol-binding protein 2 (134 aa).

Lys-41 and Gln-109 together coordinate all-trans-retinol.

It belongs to the calycin superfamily. Fatty-acid binding protein (FABP) family. In terms of tissue distribution, higher expression in adult small intestine and to a much lesser extent in fetal kidney.

The protein resides in the cytoplasm. In terms of biological role, intracellular transport of retinol. This is Retinol-binding protein 2 (RBP2) from Homo sapiens (Human).